The primary structure comprises 46 residues: Endochitinase 3 (46 aa).

The tract at residues 1-21 (MTPQGNKPSSHDVITGRWTPS) is disordered.

It belongs to the glycosyl hydrolase 19 family. Chitinase class I subfamily.

It carries out the reaction Random endo-hydrolysis of N-acetyl-beta-D-glucosaminide (1-&gt;4)-beta-linkages in chitin and chitodextrins.. Its function is as follows. Defense against chitin-containing fungal and bacterial pathogens. The polypeptide is Endochitinase 3 (Arachis hypogaea (Peanut)).